We begin with the raw amino-acid sequence, 119 residues long: Anther-specific protein BCP1 (119 aa).

Residues 1-23 form the signal peptide; sequence MGRQNVVVVFGLVFLAVLGLAAA. Over residues 24-42 the composition is skewed to low complexity; the sequence is ASSPSPSASPSKAPSTSTP. A disordered region spans residues 24-95; the sequence is ASSPSPSASP…PSGSADSADS (72 aa). Residues 24–98 are Extracellular-facing; the sequence is ASSPSPSASP…SADSADSGAA (75 aa). Residues 56–69 are compositionally biased toward acidic residues; the sequence is TDDDAAASPGDDDV. A compositionally biased stretch (low complexity) spans 82–95; sequence GSNGPSGSADSADS. A helical membrane pass occupies residues 99 to 118; sequence ALGVSAVVVGVTSIVGSFLF. F119 is a topological domain (cytoplasmic).

As to expression, expressed in mature pollen grains, developing microspores and tapetal cells.

It is found in the membrane. In terms of biological role, required for pollen fertility and development. Active in both diploid tapetum and haploid microspores. Major pollen protein. The sequence is that of Anther-specific protein BCP1 (BCP1) from Brassica campestris (Field mustard).